The chain runs to 311 residues: Formimidoylglutamase (311 aa).

Mn(2+) is bound by residues histidine 130, aspartate 155, histidine 157, aspartate 159, cysteine 242, and aspartate 244.

This sequence belongs to the arginase family. Requires Mn(2+) as cofactor.

The enzyme catalyses N-formimidoyl-L-glutamate + H2O = formamide + L-glutamate. Its pathway is amino-acid degradation; L-histidine degradation into L-glutamate; L-glutamate from N-formimidoyl-L-glutamate (hydrolase route): step 1/1. Catalyzes the conversion of N-formimidoyl-L-glutamate to L-glutamate and formamide. This Staphylococcus aureus (strain MSSA476) protein is Formimidoylglutamase.